The primary structure comprises 208 residues: LexA repressor (208 aa).

Positions 28–48 (VREIGEAVGLASSSTVHGHLA) form a DNA-binding region, H-T-H motif. Catalysis depends on for autocatalytic cleavage activity residues Ser-130 and Lys-168.

This sequence belongs to the peptidase S24 family. In terms of assembly, homodimer.

The enzyme catalyses Hydrolysis of Ala-|-Gly bond in repressor LexA.. Represses a number of genes involved in the response to DNA damage (SOS response), including recA and lexA. In the presence of single-stranded DNA, RecA interacts with LexA causing an autocatalytic cleavage which disrupts the DNA-binding part of LexA, leading to derepression of the SOS regulon and eventually DNA repair. The sequence is that of LexA repressor from Shouchella clausii (strain KSM-K16) (Alkalihalobacillus clausii).